The sequence spans 154 residues: SsrA-binding protein (154 aa).

It belongs to the SmpB family.

The protein resides in the cytoplasm. Required for rescue of stalled ribosomes mediated by trans-translation. Binds to transfer-messenger RNA (tmRNA), required for stable association of tmRNA with ribosomes. tmRNA and SmpB together mimic tRNA shape, replacing the anticodon stem-loop with SmpB. tmRNA is encoded by the ssrA gene; the 2 termini fold to resemble tRNA(Ala) and it encodes a 'tag peptide', a short internal open reading frame. During trans-translation Ala-aminoacylated tmRNA acts like a tRNA, entering the A-site of stalled ribosomes, displacing the stalled mRNA. The ribosome then switches to translate the ORF on the tmRNA; the nascent peptide is terminated with the 'tag peptide' encoded by the tmRNA and targeted for degradation. The ribosome is freed to recommence translation, which seems to be the essential function of trans-translation. The polypeptide is SsrA-binding protein (Lachnoclostridium phytofermentans (strain ATCC 700394 / DSM 18823 / ISDg) (Clostridium phytofermentans)).